Here is a 350-residue protein sequence, read N- to C-terminus: tRNA N6-adenosine threonylcarbamoyltransferase (350 aa).

Residues histidine 115 and histidine 119 each contribute to the Fe cation site. Substrate contacts are provided by residues 137-141 (IISGG), aspartate 170, glycine 183, and asparagine 281. Fe cation is bound at residue aspartate 309.

This sequence belongs to the KAE1 / TsaD family. Fe(2+) serves as cofactor.

The protein localises to the cytoplasm. The enzyme catalyses L-threonylcarbamoyladenylate + adenosine(37) in tRNA = N(6)-L-threonylcarbamoyladenosine(37) in tRNA + AMP + H(+). Functionally, required for the formation of a threonylcarbamoyl group on adenosine at position 37 (t(6)A37) in tRNAs that read codons beginning with adenine. Is involved in the transfer of the threonylcarbamoyl moiety of threonylcarbamoyl-AMP (TC-AMP) to the N6 group of A37, together with TsaE and TsaB. TsaD likely plays a direct catalytic role in this reaction. This is tRNA N6-adenosine threonylcarbamoyltransferase from Ehrlichia canis (strain Jake).